Reading from the N-terminus, the 200-residue chain is UPF0316 protein Mhun_0543 (200 aa).

The next 3 membrane-spanning stretches (helical) occupy residues 3 to 23 (VGFL…IFLA), 44 to 64 (FIAP…IGQV), and 71 to 91 (PICY…GMEL).

It belongs to the UPF0316 family.

It localises to the cell membrane. This Methanospirillum hungatei JF-1 (strain ATCC 27890 / DSM 864 / NBRC 100397 / JF-1) protein is UPF0316 protein Mhun_0543.